The following is a 433-amino-acid chain: Serine/threonine-protein kinase toxin HipA (433 aa).

S147 bears the Phosphoserine; by autocatalysis mark. Residues 151–154, K178, and 220–222 contribute to the ATP site; these read VQPK and ERF. D306 serves as the catalytic Proton acceptor. Residues 308 to 311 and 327 to 328 each bind ATP; these read HGKN and YD. 2 DNA-binding regions span residues 380 to 384 and R429; that span reads RIARR.

This sequence belongs to the HipA Ser/Thr kinase family. Monomer. Forms a HipA(2)HipB(2)-DNA complex with cognate antitoxin HipB; has higher affinity for the latter when HipB is prebound to DNA and HipA is phosphorylated. Binds DNA in the ternary complex.

It catalyses the reaction L-seryl-[protein] + ATP = O-phospho-L-seryl-[protein] + ADP + H(+). The enzyme catalyses L-threonyl-[protein] + ATP = O-phospho-L-threonyl-[protein] + ADP + H(+). Toxic component of a type II toxin-antitoxin (TA) system; overexpression in wild-type temporarily inhibits cell growth, overexpression in a hipAB deletion leads to acute growth inhibition. The toxic effect of HipA is neutralized by its cognate antitoxin HipB. In the ternary phosphoserine-HipA-HipB-DNA complex the DNA is bent about 125 degrees; all HipA in the crystallized ternary complex is phosphorylated. In E.coli phosphorylation of HipA is thought to release HipB from the HipA-HipB-DNA complex, suggesting the complex functions differently in the 2 bacteria. Phosphorylates Glu-tRNA-ligase (GltX, on 'Ser-239') in vivo, with HipB probably acts as a corepressor for transcription of the hipBA promoter. The polypeptide is Serine/threonine-protein kinase toxin HipA (Shewanella oneidensis (strain ATCC 700550 / JCM 31522 / CIP 106686 / LMG 19005 / NCIMB 14063 / MR-1)).